The sequence spans 248 residues: MGQKIHPTGFRLGVIKEHRSRWFADPARYPALLREDDLIRAYLTKQLSSAGLADIQIERKADQIDLEIRAARPGVVVGRGGSGLDALRQGLQKELSSHGSPERTIRINVVEVTRADAEAVLLAENIAQQLERRIAFRRIVRQVIQRAQRAGVQGIKIQIAGRLNGAEIARTEWTREGRIPLHTLRADIDYADHIAQTTFGVIGVKVWVFKGEVLPGQERPEQKVPLQQPKRRQQRRRPTFEDRSAVEA.

The 75-residue stretch at 39-113 folds into the KH type-2 domain; that stretch reads IRAYLTKQLS…TIRINVVEVT (75 aa). The disordered stretch occupies residues 218–248; the sequence is ERPEQKVPLQQPKRRQQRRRPTFEDRSAVEA. A compositionally biased stretch (basic and acidic residues) spans 238 to 248; that stretch reads PTFEDRSAVEA.

Belongs to the universal ribosomal protein uS3 family. In terms of assembly, part of the 30S ribosomal subunit. Forms a tight complex with proteins S10 and S14.

Functionally, binds the lower part of the 30S subunit head. Binds mRNA in the 70S ribosome, positioning it for translation. This is Small ribosomal subunit protein uS3 from Synechococcus sp. (strain JA-3-3Ab) (Cyanobacteria bacterium Yellowstone A-Prime).